The sequence spans 414 residues: Sex comb on midleg-like protein 4 (414 aa).

S55 and S65 each carry phosphoserine. A compositionally biased stretch (polar residues) spans 257 to 276 (HRGSLHPSSSLYCKRQNSGD). Positions 257 to 343 (HRGSLHPSSS…DARRPRSRNP (87 aa)) are disordered. Residues 284 to 304 (AATAGGPRTSPMSSGGPSAPG) show a composition bias toward low complexity. The 67-residue stretch at 288–354 (GGPRTSPMSS…AWTVEDVVWF (67 aa)) folds into the SAM domain. A compositionally biased stretch (polar residues) spans 312–332 (PKRNTTSLEGNRCASSPSQDA).

The protein belongs to the SCM family.

It localises to the nucleus. In terms of biological role, putative Polycomb group (PcG) protein. PcG proteins act by forming multiprotein complexes, which are required to maintain the transcriptionally repressive state of homeotic genes throughout development. In Homo sapiens (Human), this protein is Sex comb on midleg-like protein 4 (SCML4).